The following is a 276-amino-acid chain: Rhomboid protease GlpG (276 aa).

A run of 6 helical transmembrane segments spans residues 94–114, 142–162, 169–189, 192–212, 229–249, and 250–270; these read GPVTWIVMIACVLVYIAMSLI, IFMHFSLMHILFNLLWWWYLG, LGSGKLIVITVVSALLSGYVQ, FSGPWFGGLSGVVYALMGYVW, LIIFALLWIVAGWFDWFGMSM, and ANGAHIAGLIVGLAMAFVDTL. Ser201 acts as the Nucleophile in catalysis. Residue His254 is part of the active site.

The protein belongs to the peptidase S54 family.

It is found in the cell inner membrane. It carries out the reaction Cleaves type-1 transmembrane domains using a catalytic dyad composed of serine and histidine that are contributed by different transmembrane domains.. Rhomboid-type serine protease that catalyzes intramembrane proteolysis. The sequence is that of Rhomboid protease GlpG from Salmonella choleraesuis (strain SC-B67).